The primary structure comprises 368 residues: Anhydro-N-acetylmuramic acid kinase (368 aa).

11 to 18 (GTSLDGID) contacts ATP.

It belongs to the anhydro-N-acetylmuramic acid kinase family.

The catalysed reaction is 1,6-anhydro-N-acetyl-beta-muramate + ATP + H2O = N-acetyl-D-muramate 6-phosphate + ADP + H(+). Its pathway is amino-sugar metabolism; 1,6-anhydro-N-acetylmuramate degradation. It functions in the pathway cell wall biogenesis; peptidoglycan recycling. Catalyzes the specific phosphorylation of 1,6-anhydro-N-acetylmuramic acid (anhMurNAc) with the simultaneous cleavage of the 1,6-anhydro ring, generating MurNAc-6-P. Is required for the utilization of anhMurNAc either imported from the medium or derived from its own cell wall murein, and thus plays a role in cell wall recycling. This Sulfurimonas denitrificans (strain ATCC 33889 / DSM 1251) (Thiomicrospira denitrificans (strain ATCC 33889 / DSM 1251)) protein is Anhydro-N-acetylmuramic acid kinase.